Consider the following 1239-residue polypeptide: Codanin-1 (1239 aa).

Ala-2 carries the N-acetylalanine modification. Residues 61–72 (SRVLPQGPSTPA) are compositionally biased toward polar residues. 2 disordered regions span residues 61–249 (SRVL…PPGC) and 261–299 (KART…ADPA). Thr-70 is subject to Phosphothreonine. 3 stretches are compositionally biased toward low complexity: residues 77 to 88 (ASAALPARQGAP), 95 to 116 (ARSQ…PLAR), and 138 to 179 (GAAE…LSNL). The tract at residues 193-213 (AGRTKPSRRINPTPVSEERSL) is interaction with ASF1A/B. Positions 219–238 (CFTSPPISCVPSSQPSTLDT) are enriched in polar residues. Phosphoserine is present on Ser-270. The next 2 membrane-spanning stretches (helical) occupy residues 317 to 337 (CIAE…LQLL) and 631 to 651 (FAVV…VAFL).

Interacts with ASF1A and ASF1B. Found in a cytosolic complex with ASF1A, ASF1B, IPO4 and histones H3.1 and H4. As to expression, widely expressed in adult mice, the highest levels can be measured in erythropoietic cells.

It is found in the cytoplasm. Its subcellular location is the nucleus. It localises to the membrane. May act as a negative regulator of ASF1 in chromatin assembly. This is Codanin-1 (Cdan1) from Mus musculus (Mouse).